The chain runs to 283 residues: Pantothenate synthetase (283 aa).

ATP is bound at residue 30–37 (MGNLHDAH). Catalysis depends on H37, which acts as the Proton donor. Q61 serves as a coordination point for (R)-pantoate. Beta-alanine is bound at residue Q61. 149–152 (GVKD) contributes to the ATP binding site. Q155 provides a ligand contact to (R)-pantoate. ATP-binding positions include V178 and 186-189 (MSSR).

It belongs to the pantothenate synthetase family. Homodimer.

The protein resides in the cytoplasm. It carries out the reaction (R)-pantoate + beta-alanine + ATP = (R)-pantothenate + AMP + diphosphate + H(+). Its pathway is cofactor biosynthesis; (R)-pantothenate biosynthesis; (R)-pantothenate from (R)-pantoate and beta-alanine: step 1/1. In terms of biological role, catalyzes the condensation of pantoate with beta-alanine in an ATP-dependent reaction via a pantoyl-adenylate intermediate. This Cellvibrio japonicus (strain Ueda107) (Pseudomonas fluorescens subsp. cellulosa) protein is Pantothenate synthetase.